Reading from the N-terminus, the 271-residue chain is Calretinin (271 aa).

6 EF-hand domains span residues leucine 16–alanine 51, asparagine 63–phenylalanine 98, glycine 107–lysine 142, lysine 151–phenylalanine 186, leucine 195–lysine 230, and methionine 235–proline 270. Positions 29, 31, 33, 35, 40, 76, 78, 80, 82, 87, 120, 122, 124, 126, 131, 164, 166, 168, 170, 175, 208, 210, 212, 214, and 219 each coordinate Ca(2+). Phosphotyrosine is present on tyrosine 214.

The protein belongs to the calbindin family. In terms of tissue distribution, widely expressed in central nervous system. Expressed in type I unipolar brush cells of the cerebellum (at protein level).

The protein resides in the synapse. It localises to the cell projection. The protein localises to the dendrite. Functionally, calcium-binding protein involved in calcium homeostasis and signal transduction. It plays a critical role in buffering intracellular calcium levels and modulating calcium-dependent signaling pathways. Predominantly expressed in specific neuronal populations, influences synaptic plasticity and neuronal excitability, contributing to learning and memory. During embryonic development, it facilitates neuronal differentiation and maturation. In Mus musculus (Mouse), this protein is Calretinin (Calb2).